A 374-amino-acid chain; its full sequence is 4-hydroxybenzoate polyprenyltransferase, mitochondrial (374 aa).

A mitochondrion-targeting transit peptide spans 1-63; that stretch reads MLRLGGAGLV…RALSLSAAAV (63 aa). At 64 to 83 the chain is on the mitochondrial matrix side; the sequence is VNSAPRPLQPYLRLMRLDKP. A helical membrane pass occupies residues 84–104; the sequence is IGTWLLYLPCTWSIGLAADPG. Residues 105–108 are Mitochondrial intermembrane-facing; it reads CFPD. The chain crosses the membrane as a helical span at residues 109–129; sequence WYMLSLFGTGAILMRGAGCTI. The Mitochondrial matrix segment spans residues 130–153; the sequence is NDMWDRDFDKKVERTANRPIAAGD. Residues 154 to 174 traverse the membrane as a helical segment; that stretch reads ISAFQSFVFLGAQLTLALGVL. Topologically, residues 175 to 176 are mitochondrial intermembrane; the sequence is LH. Residues 177-197 traverse the membrane as a helical segment; it reads LNYYSIAMGAASLLLVVTYPL. Topologically, residues 198–200 are mitochondrial matrix; it reads MKR. The chain crosses the membrane as a helical span at residues 201 to 221; the sequence is VTFWPQLALGLTFNWGALLGW. Residues 222–230 are Mitochondrial intermembrane-facing; the sequence is SAVKGSCDP. Residues 231 to 251 traverse the membrane as a helical segment; it reads AVCLPLYFSGVMWTLIYDTIY. The Mitochondrial matrix portion of the chain corresponds to 252-277; that stretch reads AHQDKKDDALIGLKSTALLFRENTKQ. A helical transmembrane segment spans residues 278-298; it reads WLSGFGVAMVGALSLVGASSG. Residues 299-300 are Mitochondrial intermembrane-facing; it reads QT. A helical transmembrane segment spans residues 301 to 321; it reads LPYYAAVAAVGAHLAHQIYTV. The Mitochondrial matrix segment spans residues 322-332; sequence DIHRAEDCWEK. A helical membrane pass occupies residues 333–353; it reads FTSNRTVGLLLFLGIVLGNLY. Residues 354–374 lie on the Mitochondrial intermembrane side of the membrane; the sequence is KDKPDETKGVDAVGEESERTS.

Belongs to the UbiA prenyltransferase family. Requires Mg(2+) as cofactor.

The protein localises to the mitochondrion inner membrane. The enzyme catalyses an all-trans-polyprenyl diphosphate + 4-hydroxybenzoate = a 4-hydroxy-3-(all-trans-polyprenyl)benzoate + diphosphate. The catalysed reaction is all-trans-decaprenyl diphosphate + 4-hydroxybenzoate = 4-hydroxy-3-(all-trans-decaprenyl)benzoate + diphosphate. It catalyses the reaction all-trans-nonaprenyl diphosphate + 4-hydroxybenzoate = 4-hydroxy-3-(all-trans-nonaprenyl)benzoate + diphosphate. It functions in the pathway cofactor biosynthesis; ubiquinone biosynthesis. Its function is as follows. Mediates the second step in the final reaction sequence of coenzyme Q (CoQ) biosynthesis. Catalyzes the prenylation of para-hydroxybenzoate (PHB) with an all-trans polyprenyl group (such as all-trans-nonaprenyl diphosphate). The length of the polyprenyl side chain varies depending on the species, in humans, the side chain is comprised of 10 isoprenyls producing CoQ10 (also known as ubiquinone), whereas rodents predominantly generate CoQ9. However, this specificity is not complete, human tissues have low amounts of CoQ9 and rodent organs contain some CoQ10. Plays a central role in the biosynthesis of CoQ9. CoQ9 is a vital molecule that transports electrons from mitochondrial respiratory chain complexes. CoQs also function as cofactors for uncoupling protein and plays a role as regulator of the extracellularly-induced ceramide-dependent apoptotic pathway. Regulates mitochondrial permeability transition pore (mPTP) opening and ROS production (pivotal events in cell death) in a tissue specific manner. The chain is 4-hydroxybenzoate polyprenyltransferase, mitochondrial from Rattus norvegicus (Rat).